The chain runs to 127 residues: Aspartate 1-decarboxylase (127 aa).

Catalysis depends on serine 25, which acts as the Schiff-base intermediate with substrate; via pyruvic acid. Serine 25 is subject to Pyruvic acid (Ser). Threonine 57 contacts substrate. Tyrosine 58 serves as the catalytic Proton donor. Substrate is bound at residue 73 to 75 (GAA).

The protein belongs to the PanD family. As to quaternary structure, heterooctamer of four alpha and four beta subunits. Requires pyruvate as cofactor. In terms of processing, is synthesized initially as an inactive proenzyme, which is activated by self-cleavage at a specific serine bond to produce a beta-subunit with a hydroxyl group at its C-terminus and an alpha-subunit with a pyruvoyl group at its N-terminus.

It is found in the cytoplasm. The enzyme catalyses L-aspartate + H(+) = beta-alanine + CO2. It functions in the pathway cofactor biosynthesis; (R)-pantothenate biosynthesis; beta-alanine from L-aspartate: step 1/1. Catalyzes the pyruvoyl-dependent decarboxylation of aspartate to produce beta-alanine. This chain is Aspartate 1-decarboxylase, found in Neisseria meningitidis serogroup C / serotype 2a (strain ATCC 700532 / DSM 15464 / FAM18).